We begin with the raw amino-acid sequence, 891 residues long: Alanine--tRNA ligase (891 aa).

Zn(2+) contacts are provided by histidine 564, histidine 568, cysteine 678, and histidine 682.

It belongs to the class-II aminoacyl-tRNA synthetase family. Zn(2+) serves as cofactor.

It localises to the cytoplasm. It carries out the reaction tRNA(Ala) + L-alanine + ATP = L-alanyl-tRNA(Ala) + AMP + diphosphate. In terms of biological role, catalyzes the attachment of alanine to tRNA(Ala) in a two-step reaction: alanine is first activated by ATP to form Ala-AMP and then transferred to the acceptor end of tRNA(Ala). Also edits incorrectly charged Ser-tRNA(Ala) and Gly-tRNA(Ala) via its editing domain. The chain is Alanine--tRNA ligase from Nitrobacter winogradskyi (strain ATCC 25391 / DSM 10237 / CIP 104748 / NCIMB 11846 / Nb-255).